Here is a 338-residue protein sequence, read N- to C-terminus: Holliday junction branch migration complex subunit RuvB (338 aa).

A large ATPase domain (RuvB-L) region spans residues 1–181 (MEERILTQNF…FGVINRLDYY (181 aa)). Residues L20, R21, G62, K65, T66, T67, 128 to 130 (EDF), R171, Y181, and R218 contribute to the ATP site. T66 is a Mg(2+) binding site. Residues 182–252 (SVEELKEIIK…TSKEALDVLG (71 aa)) form a small ATPAse domain (RuvB-S) region. The interval 255–338 (EIGLEYIDRK…YIEQGRIEGV (84 aa)) is head domain (RuvB-H). DNA contacts are provided by R310 and R315.

Belongs to the RuvB family. Homohexamer. Forms an RuvA(8)-RuvB(12)-Holliday junction (HJ) complex. HJ DNA is sandwiched between 2 RuvA tetramers; dsDNA enters through RuvA and exits via RuvB. An RuvB hexamer assembles on each DNA strand where it exits the tetramer. Each RuvB hexamer is contacted by two RuvA subunits (via domain III) on 2 adjacent RuvB subunits; this complex drives branch migration. In the full resolvosome a probable DNA-RuvA(4)-RuvB(12)-RuvC(2) complex forms which resolves the HJ.

The protein resides in the cytoplasm. It carries out the reaction ATP + H2O = ADP + phosphate + H(+). Functionally, the RuvA-RuvB-RuvC complex processes Holliday junction (HJ) DNA during genetic recombination and DNA repair, while the RuvA-RuvB complex plays an important role in the rescue of blocked DNA replication forks via replication fork reversal (RFR). RuvA specifically binds to HJ cruciform DNA, conferring on it an open structure. The RuvB hexamer acts as an ATP-dependent pump, pulling dsDNA into and through the RuvAB complex. RuvB forms 2 homohexamers on either side of HJ DNA bound by 1 or 2 RuvA tetramers; 4 subunits per hexamer contact DNA at a time. Coordinated motions by a converter formed by DNA-disengaged RuvB subunits stimulates ATP hydrolysis and nucleotide exchange. Immobilization of the converter enables RuvB to convert the ATP-contained energy into a lever motion, pulling 2 nucleotides of DNA out of the RuvA tetramer per ATP hydrolyzed, thus driving DNA branch migration. The RuvB motors rotate together with the DNA substrate, which together with the progressing nucleotide cycle form the mechanistic basis for DNA recombination by continuous HJ branch migration. Branch migration allows RuvC to scan DNA until it finds its consensus sequence, where it cleaves and resolves cruciform DNA. The sequence is that of Holliday junction branch migration complex subunit RuvB from Thermoanaerobacter pseudethanolicus (strain ATCC 33223 / 39E) (Clostridium thermohydrosulfuricum).